We begin with the raw amino-acid sequence, 462 residues long: Glycoprotein endo-alpha-1,2-mannosidase (462 aa).

Over 1-8 the chain is Cytoplasmic; it reads MAKFRRGT. Residues 9–29 traverse the membrane as a helical; Signal-anchor for type II membrane protein segment; the sequence is CIILALFILFIFSLMMGLKML. The Lumenal portion of the chain corresponds to 30–462; sequence RPNTATFGAP…YALDHQLPVS (433 aa). The interval 60-462 is catalytic; sequence DFQKSDRINS…YALDHQLPVS (403 aa).

The protein belongs to the glycosyl hydrolase 99 family. Post-translationally, undergoes proteolytic cleavage in the C-terminal region.

The protein resides in the golgi apparatus membrane. It carries out the reaction N-{alpha-Glc-(1-&gt;3)-alpha-Man-(1-&gt;2)-alpha-Man-(1-&gt;2)-alpha-Man-(1-&gt;3)-[alpha-Man-(1-&gt;2)-alpha-Man-(1-&gt;3)-[alpha-Man-(1-&gt;2)-alpha-Man-(1-&gt;6)]-alpha-Man-(1-&gt;6)]-beta-Man-(1-&gt;4)-beta-GlcNAc-(1-&gt;4)-beta-GlcNAc}-L-asparaginyl-[protein] + H2O = alpha-D-glucosyl-(1-&gt;3)-D-mannopyranose + N(4)-{alpha-D-Man-(1-&gt;2)-alpha-D-Man-(1-&gt;3)-[alpha-D-Man-(1-&gt;2)-alpha-D-Man-(1-&gt;3)-[alpha-D-Man-(1-&gt;2)-alpha-D-Man-(1-&gt;6)]-alpha-D-Man-(1-&gt;6)]-beta-D-Man-(1-&gt;4)-beta-D-GlaNAc-(1-&gt;4)-beta-D-GlcNAc}-L-asparaginyl-[protein] (N-glucan mannose isomer 8A1,2,3B1,2). This Pongo abelii (Sumatran orangutan) protein is Glycoprotein endo-alpha-1,2-mannosidase (MANEA).